A 117-amino-acid polypeptide reads, in one-letter code: Immunoglobulin heavy variable 1-2 (117 aa).

The first 19 residues, 1 to 19 (MDWTWRILFLVAAATGAHS), serve as a signal peptide directing secretion. Gln20 bears the Pyrrolidone carboxylic acid mark. The tract at residues 20–44 (QVQLVQSGAEVKKPGASVKVSCKAS) is framework-1. An Ig-like domain is found at 20–117 (QVQLVQSGAE…DDTAVYYCAR (98 aa)). Cys41 and Cys115 are disulfide-bonded. A complementarity-determining-1 region spans residues 45-52 (GYTFTGYY). Residues 53 to 69 (MHWVRQAPGQGLEWMGW) form a framework-2 region. A complementarity-determining-2 region spans residues 70–77 (INPNSGGT). Residues 78–115 (NYAQKFQGWVTMTRDTSISTAYMELSRLRSDDTAVYYC) are framework-3. The segment at 116–117 (AR) is complementarity-determining-3.

As to quaternary structure, immunoglobulins are composed of two identical heavy chains and two identical light chains; disulfide-linked.

It is found in the secreted. Its subcellular location is the cell membrane. Its function is as follows. V region of the variable domain of immunoglobulin heavy chains that participates in the antigen recognition. Immunoglobulins, also known as antibodies, are membrane-bound or secreted glycoproteins produced by B lymphocytes. In the recognition phase of humoral immunity, the membrane-bound immunoglobulins serve as receptors which, upon binding of a specific antigen, trigger the clonal expansion and differentiation of B lymphocytes into immunoglobulins-secreting plasma cells. Secreted immunoglobulins mediate the effector phase of humoral immunity, which results in the elimination of bound antigens. The antigen binding site is formed by the variable domain of one heavy chain, together with that of its associated light chain. Thus, each immunoglobulin has two antigen binding sites with remarkable affinity for a particular antigen. The variable domains are assembled by a process called V-(D)-J rearrangement and can then be subjected to somatic hypermutations which, after exposure to antigen and selection, allow affinity maturation for a particular antigen. This chain is Immunoglobulin heavy variable 1-2, found in Homo sapiens (Human).